Reading from the N-terminus, the 508-residue chain is Maturase K (508 aa).

This sequence belongs to the intron maturase 2 family. MatK subfamily.

Its subcellular location is the plastid. The protein resides in the chloroplast. Its function is as follows. Usually encoded in the trnK tRNA gene intron. Probably assists in splicing its own and other chloroplast group II introns. This is Maturase K from Gordonia lasianthus (Loblolly bay).